Reading from the N-terminus, the 158-residue chain is Cytochrome c-type biogenesis protein CcmE (158 aa).

Residues 1-8 (MMRHRNRR) are Cytoplasmic-facing. The chain crosses the membrane as a helical; Signal-anchor for type II membrane protein span at residues 9-29 (LATIAASAIVLVVAVGLGLMA). The Periplasmic portion of the chain corresponds to 30–158 (LRSAVVFFYS…PSAAGDGDSR (129 aa)). 2 residues coordinate heme: His123 and Tyr127. The tract at residues 139–158 (AGVWQGEGETPSAAGDGDSR) is disordered.

Belongs to the CcmE/CycJ family.

The protein localises to the cell inner membrane. Functionally, heme chaperone required for the biogenesis of c-type cytochromes. Transiently binds heme delivered by CcmC and transfers the heme to apo-cytochromes in a process facilitated by CcmF and CcmH. The protein is Cytochrome c-type biogenesis protein CcmE of Maricaulis maris (strain MCS10) (Caulobacter maris).